A 37-amino-acid chain; its full sequence is Large ribosomal subunit protein bL36 (37 aa).

It belongs to the bacterial ribosomal protein bL36 family.

This Ureaplasma urealyticum serovar 10 (strain ATCC 33699 / Western) protein is Large ribosomal subunit protein bL36.